We begin with the raw amino-acid sequence, 805 residues long: Phenylalanine--tRNA ligase beta subunit (805 aa).

Residues 40–162 (FKNPDYLQLG…NRDEFGDYLS (123 aa)) enclose the tRNA-binding domain. The B5 domain occupies 412–486 (AFNRKIYLNF…KILDLNKIKE (75 aa)). Positions 464, 470, 473, and 474 each coordinate Mg(2+).

It belongs to the phenylalanyl-tRNA synthetase beta subunit family. Type 1 subfamily. Tetramer of two alpha and two beta subunits. Mg(2+) serves as cofactor.

It localises to the cytoplasm. The catalysed reaction is tRNA(Phe) + L-phenylalanine + ATP = L-phenylalanyl-tRNA(Phe) + AMP + diphosphate + H(+). The protein is Phenylalanine--tRNA ligase beta subunit (pheT) of Mycoplasma pneumoniae (strain ATCC 29342 / M129 / Subtype 1) (Mycoplasmoides pneumoniae).